A 328-amino-acid polypeptide reads, in one-letter code: UDP-N-acetylglucosamine transporter YEA4 (328 aa).

10 consecutive transmembrane segments (helical) span residues methionine 1–phenylalanine 21, isoleucine 30–proline 50, histidine 66–asparagine 86, isoleucine 98–cysteine 118, tyrosine 122–leucine 142, serine 166–leucine 186, tryptophan 198–threonine 218, leucine 241–isoleucine 261, leucine 274–isoleucine 294, and valine 298–serine 318.

Belongs to the nucleotide-sugar transporter family. SLC35A subfamily.

It is found in the golgi apparatus membrane. In terms of biological role, sugar transporter that specifically mediates the transport of UDP-N-acetylglucosamine (UDP-GlcNAc) from the cytosol into Golgi vesicles where glycosyltransferases function. In Kluyveromyces lactis (strain ATCC 8585 / CBS 2359 / DSM 70799 / NBRC 1267 / NRRL Y-1140 / WM37) (Yeast), this protein is UDP-N-acetylglucosamine transporter YEA4 (YEA4).